The primary structure comprises 264 residues: uncharacterized protein (264 aa).

2 disordered regions span residues 1-52 (MPRS…AVPG) and 123-207 (GGRW…PWTR). Residues 29 to 40 (AAHPTTSPTAAS) show a composition bias toward low complexity. A compositionally biased stretch (polar residues) spans 144–154 (HFQSSGAQQES). The span at 188 to 197 (ARKSACKCPR) shows a compositional bias: basic residues.

This is an uncharacterized protein from Homo sapiens (Human).